A 64-amino-acid polypeptide reads, in one-letter code: MAKMAKTFVVTLKRSTIKCTQDQKDAVRVLGLKKIRQTVEVKDSAAARGNIMKVQHLIDVEVKG.

It belongs to the universal ribosomal protein uL30 family. Part of the 50S ribosomal subunit.

This Bdellovibrio bacteriovorus (strain ATCC 15356 / DSM 50701 / NCIMB 9529 / HD100) protein is Large ribosomal subunit protein uL30.